The primary structure comprises 358 residues: Pseudouridylate synthase RPUSD4, mitochondrial (358 aa).

A mitochondrion-targeting transit peptide spans 1-12 (MRHAREVTFARL).

This sequence belongs to the pseudouridine synthase RluA family.

It localises to the mitochondrion matrix. It is found in the nucleus. The protein localises to the cytoplasm. It carries out the reaction uridine in 5S rRNA = pseudouridine in 5S rRNA. The enzyme catalyses a uridine in tRNA = a pseudouridine in tRNA. It catalyses the reaction a uridine in mRNA = a pseudouridine in mRNA. In terms of biological role, catalyzes uridine to pseudouridine isomerization (pseudouridylation) of different mitochondrial RNA substrates. Acts on position 1397 in 16S mitochondrial ribosomal RNA (16S mt-rRNA). This modification is required for the assembly of 16S mt-rRNA into a functional mitochondrial ribosome. Acts on position 39 in mitochondrial tRNA(Phe). Also catalyzes pseudouridylation of mRNAs in nucleus: acts as a regulator of pre-mRNA splicing by mediating pseudouridylation of pre-mRNAs at locations associated with alternatively spliced regions. Pseudouridylation of pre-mRNAs near splice sites directly regulates mRNA splicing and mRNA 3'-end processing. The polypeptide is Pseudouridylate synthase RPUSD4, mitochondrial (Danio rerio (Zebrafish)).